Reading from the N-terminus, the 433-residue chain is Serine/threonine-protein kinase Sgk1 (433 aa).

A disordered region spans residues 66–92; it reads QDVELMNSNPSPPPSPSQQINLGPSSN. Residues 83 to 92 show a composition bias toward polar residues; the sequence is QQINLGPSSN. Positions 100 to 357 constitute a Protein kinase domain; that stretch reads FDFLKVIGKG…FTEIKNHMFF (258 aa). ATP contacts are provided by residues 106-114 and K129; that span reads IGKGSFGKV. The active-site Proton acceptor is D224. The AGC-kinase C-terminal domain occupies 358–433; sequence SPINWDDLNA…SYAPAMDSYL (76 aa).

Belongs to the protein kinase superfamily. AGC Ser/Thr protein kinase family.

It localises to the cytoplasm. It is found in the nucleus. The protein resides in the endoplasmic reticulum. It carries out the reaction L-seryl-[protein] + ATP = O-phospho-L-seryl-[protein] + ADP + H(+). The enzyme catalyses L-threonyl-[protein] + ATP = O-phospho-L-threonyl-[protein] + ADP + H(+). Protein kinase that may play an important role in cellular stress response. May be involved in the regulation of processes such as cell survival, neuronal excitability and renal sodium excretion. The protein is Serine/threonine-protein kinase Sgk1 (sgk1) of Danio rerio (Zebrafish).